Here is a 105-residue protein sequence, read N- to C-terminus: Met repressor (105 aa).

It belongs to the MetJ family. As to quaternary structure, homodimer.

The protein resides in the cytoplasm. Its function is as follows. This regulatory protein, when combined with SAM (S-adenosylmethionine) represses the expression of the methionine regulon and of enzymes involved in SAM synthesis. The protein is Met repressor of Histophilus somni (strain 129Pt) (Haemophilus somnus).